The following is a 572-amino-acid chain: Acetyl-coenzyme A synthetase (572 aa).

T260 lines the CoA pocket. Residues 333–335 (GEP), 354–359 (DTWWMT), D440, and R455 each bind ATP. S463 provides a ligand contact to CoA. R466 is an ATP binding site. Positions 477, 479, and 482 each coordinate Mg(2+). K524 serves as a coordination point for CoA. The residue at position 549 (K549) is an N6-acetyllysine.

The protein belongs to the ATP-dependent AMP-binding enzyme family. Interacts with FloT. Mg(2+) serves as cofactor. In terms of processing, acetylated. Deacetylation by the SIR2-homolog deacetylase activates the enzyme.

The protein resides in the cell membrane. It is found in the membrane raft. The catalysed reaction is acetate + ATP + CoA = acetyl-CoA + AMP + diphosphate. Functionally, catalyzes the conversion of acetate into acetyl-CoA (AcCoA), an essential intermediate at the junction of anabolic and catabolic pathways. AcsA undergoes a two-step reaction. In the first half reaction, AcsA combines acetate with ATP to form acetyl-adenylate (AcAMP) intermediate. In the second half reaction, it can then transfer the acetyl group from AcAMP to the sulfhydryl group of CoA, forming the product AcCoA. Has a role in growth and sporulation on acetate. In Bacillus subtilis (strain 168), this protein is Acetyl-coenzyme A synthetase (acsA).